The following is a 284-amino-acid chain: MVQIIDGKALAQKMQAALAKKVESLKAEKGIVPGLVVILVGDNPASQVYVRNKERAALAAGFKSETVRLSDSVCQEELIELIEQYNQDDTIHGILVQLPLPHHINDKSIILAIDPKKDVDGFHPMNTGHLWSGRPNMVPCTPAGIMEMFHDYGIELEGKNAVIVGRSNIVGKPMAQLLLDKNATVTLTHSRTRRLADICRRADILIVAIGQGHFITKEFVKEGAVVIDVGMNRDVNGRLIGDVAFDEVSELASMITPVPGGVGPMTITMLLEQTYQAALRRVSQ.

Residues 165–167 (GRS) and serine 190 contribute to the NADP(+) site.

This sequence belongs to the tetrahydrofolate dehydrogenase/cyclohydrolase family. In terms of assembly, homodimer.

It carries out the reaction (6R)-5,10-methylene-5,6,7,8-tetrahydrofolate + NADP(+) = (6R)-5,10-methenyltetrahydrofolate + NADPH. The enzyme catalyses (6R)-5,10-methenyltetrahydrofolate + H2O = (6R)-10-formyltetrahydrofolate + H(+). It functions in the pathway one-carbon metabolism; tetrahydrofolate interconversion. Functionally, catalyzes the oxidation of 5,10-methylenetetrahydrofolate to 5,10-methenyltetrahydrofolate and then the hydrolysis of 5,10-methenyltetrahydrofolate to 10-formyltetrahydrofolate. The chain is Bifunctional protein FolD from Streptococcus equi subsp. equi (strain 4047).